A 308-amino-acid chain; its full sequence is B- and T-lymphocyte attenuator (308 aa).

The first 29 residues, 1 to 29, serve as a signal peptide directing secretion; sequence MKTVPAMLVTPRSFREFFILLLGLWSILC. At 30–183 the chain is on the extracellular side; sequence KEPTKRIGEE…ERPGRTWLLY (154 aa). The Ig-like V-type domain maps to 32 to 134; it reads PTKRIGEECR…SANLNSEVIN (103 aa). 3 disulfide bridges follow: cysteine 40/cysteine 69, cysteine 64/cysteine 124, and cysteine 78/cysteine 85. Residues asparagine 49, asparagine 74, asparagine 81, asparagine 148, and asparagine 165 are each glycosylated (N-linked (GlcNAc...) asparagine). The chain crosses the membrane as a helical span at residues 184 to 204; that stretch reads ALLPLGTSLLLLACVCLLCFL. Residues 205 to 308 lie on the Cytoplasmic side of the membrane; the sequence is RRIQGKEKKP…TEYASICVRS (104 aa).

As to quaternary structure, interacts with tyrosine phosphatases PTPN6/SHP-1 and PTPN11/SHP-2. Interacts with TNFRSF14/HVEM (via cysteine-rich domain 1). In terms of processing, phosphorylated on Tyr residues by TNFRSF14 and by antigen receptors cross-linking, both inducing association with PTPN6 and PTPN11. N-glycosylated.

It localises to the cell membrane. Functionally, inhibitory receptor on lymphocytes that negatively regulates antigen receptor signaling via PTPN6/SHP-1 and PTPN11/SHP-2. May interact in cis (on the same cell) or in trans (on other cells) with TNFRSF14. In cis interactions, appears to play an immune regulatory role inhibiting in trans interactions in naive T cells to maintain a resting state. In trans interactions, can predominate during adaptive immune response to provide survival signals to effector T cells. The protein is B- and T-lymphocyte attenuator of Rattus norvegicus (Rat).